A 150-amino-acid polypeptide reads, in one-letter code: Small ribosomal subunit protein uS13 (150 aa).

This sequence belongs to the universal ribosomal protein uS13 family. As to quaternary structure, part of the 30S ribosomal subunit. Forms a loose heterodimer with protein S19. Forms two bridges to the 50S subunit in the 70S ribosome.

Functionally, located at the top of the head of the 30S subunit, it contacts several helices of the 16S rRNA. In the 70S ribosome it contacts the 23S rRNA (bridge B1a) and protein L5 of the 50S subunit (bridge B1b), connecting the 2 subunits; these bridges are implicated in subunit movement. The chain is Small ribosomal subunit protein uS13 from Methanocorpusculum labreanum (strain ATCC 43576 / DSM 4855 / Z).